Reading from the N-terminus, the 117-residue chain is DNA-directed RNA polymerase subunit omega (117 aa).

It belongs to the RNA polymerase subunit omega family. As to quaternary structure, the RNAP catalytic core consists of 2 alpha, 1 beta, 1 beta' and 1 omega subunit. When a sigma factor is associated with the core the holoenzyme is formed, which can initiate transcription.

The catalysed reaction is RNA(n) + a ribonucleoside 5'-triphosphate = RNA(n+1) + diphosphate. Functionally, promotes RNA polymerase assembly. Latches the N- and C-terminal regions of the beta' subunit thereby facilitating its interaction with the beta and alpha subunits. The sequence is that of DNA-directed RNA polymerase subunit omega from Cereibacter sphaeroides (strain ATCC 17029 / ATH 2.4.9) (Rhodobacter sphaeroides).